The sequence spans 113 residues: U11-theraphotoxin-Hhn1a (113 aa).

The first 21 residues, 1–21 (MNTVRVTFLPVFVLAVSLGQA), serve as a signal peptide directing secretion. The propeptide occupies 22-74 (DKDENRMEMQEKTEQGKSYLDFAENLLLQKLEELEAKLLEEDSEESRNSRQKR). Residues 61–83 (EEDSEESRNSRQKRCIGEGVPCD) are disordered. Intrachain disulfides connect Cys-75-Cys-90, Cys-82-Cys-95, and Cys-89-Cys-110.

The protein belongs to the neurotoxin 14 (magi-1) family. 01 (HNTX-16) subfamily. In terms of tissue distribution, expressed by the venom gland.

It is found in the secreted. The polypeptide is U11-theraphotoxin-Hhn1a (Cyriopagopus hainanus (Chinese bird spider)).